The primary structure comprises 357 residues: MGGLEVEKTTIGWAARDPSGVLSPYTYTLRNTGPEDVEVKVLYCGLCHTDLHQVKNDLGMSNYPLVPGHEVVGEVVEVGPDVSKFKVGDTVGVGLLVGSCRNCGPCKRDIEQYCNKKIWNCNDVYTDGKPTQGGFAKSMVVDQKFVVKIPEGMAPEQAAPLLCAGITVYSPLNHFGFKQSGLRGGILGLGGVGHMGVKIAKAMGHHVTVISSSNKKRQEALEHLGADDYLVSSDTDKMQEASDSLDYIIDTVPVGHPLEPYLSLLKIDGKLILMGVINTPLQFISPMVMLGRKSITGSFIGSMKETEEMLDFCKEKGVTSQIEIVKMDYINTAMERLEKNDVRYRFVVDVIGSKLDQ.

Position 47 (cysteine 47) interacts with Zn(2+). Position 49 (threonine 49) interacts with NADP(+). Zn(2+)-binding residues include histidine 69, glutamate 70, cysteine 100, cysteine 103, cysteine 106, cysteine 114, and cysteine 163. NADP(+) is bound by residues threonine 167, 188–193 (GLGGVG), 211–216 (SSSNKK), threonine 251, glycine 275, and 298–300 (SFI).

Belongs to the zinc-containing alcohol dehydrogenase family. Homodimer. Requires Zn(2+) as cofactor. The N-terminus is blocked.

It catalyses the reaction (E)-cinnamyl alcohol + NADP(+) = (E)-cinnamaldehyde + NADPH + H(+). It carries out the reaction (E)-coniferol + NADP(+) = (E)-coniferaldehyde + NADPH + H(+). The enzyme catalyses (E)-sinapyl alcohol + NADP(+) = (E)-sinapaldehyde + NADPH + H(+). The catalysed reaction is (E)-4-coumaroyl alcohol + NADP(+) = (E)-4-coumaraldehyde + NADPH + H(+). It catalyses the reaction (E)-caffeyl alcohol + NADP(+) = (E)-caffeyl aldehyde + NADPH + H(+). The protein operates within aromatic compound metabolism; phenylpropanoid biosynthesis. In terms of biological role, involved in lignin biosynthesis. Catalyzes the final step specific for the production of lignin monomers. Catalyzes the NADPH-dependent reduction of coniferaldehyde, 5-hydroxyconiferaldehyde, sinapaldehyde, 4-coumaraldehyde and caffeyl aldehyde to their respective alcohols. The polypeptide is Probable cinnamyl alcohol dehydrogenase 1 (Nicotiana tabacum (Common tobacco)).